The chain runs to 204 residues: Somatotropin (204 aa).

The first 17 residues, 1 to 17 (MDRVVLMLSVMSLGVSS), serve as a signal peptide directing secretion. Gln18 carries the post-translational modification Pyrrolidone carboxylic acid. His36 provides a ligand contact to Zn(2+). Cys69 and Cys177 are oxidised to a cystine. Glu186 provides a ligand contact to Zn(2+). Residues Cys194 and Cys202 are joined by a disulfide bond.

The protein belongs to the somatotropin/prolactin family.

Its subcellular location is the secreted. Growth hormone plays an important role in growth control and is involved in the regulation of several anabolic processes. Implicated as an osmoregulatory substance important for seawater adaptation. The chain is Somatotropin (gh) from Sparus aurata (Gilthead sea bream).